Reading from the N-terminus, the 371-residue chain is Peptide chain release factor 2 (371 aa).

The residue at position 251 (Q251) is an N5-methylglutamine.

Belongs to the prokaryotic/mitochondrial release factor family. Methylated by PrmC. Methylation increases the termination efficiency of RF2.

Its subcellular location is the cytoplasm. In terms of biological role, peptide chain release factor 2 directs the termination of translation in response to the peptide chain termination codons UGA and UAA. In Arthrobacter sp. (strain FB24), this protein is Peptide chain release factor 2.